The primary structure comprises 114 residues: Putative pterin-4-alpha-carbinolamine dehydratase (114 aa).

The protein belongs to the pterin-4-alpha-carbinolamine dehydratase family.

The catalysed reaction is (4aS,6R)-4a-hydroxy-L-erythro-5,6,7,8-tetrahydrobiopterin = (6R)-L-erythro-6,7-dihydrobiopterin + H2O. This chain is Putative pterin-4-alpha-carbinolamine dehydratase, found in Chlorobium luteolum (strain DSM 273 / BCRC 81028 / 2530) (Pelodictyon luteolum).